Here is a 510-residue protein sequence, read N- to C-terminus: NKAP family protein (510 aa).

Over residues 1-22 the composition is skewed to basic and acidic residues; sequence MSHRERDRDRDRDSDRDRDRNR. 3 disordered regions span residues 1–128, 149–220, and 239–401; these read MSHR…VEIQ, ERKD…NYNG, and VYER…PISE. A compositionally biased stretch (basic residues) spans 23–39; the sequence is YSRSRSRGSRSRSRSRS. Basic and acidic residues predominate over residues 40 to 89; the sequence is RSRDRNRNRDYNKDRSSNRDSYYNDRDYKKDRSSNRDRDYYDRDRNRDYK. Residues 96 to 105 are compositionally biased toward gly residues; it reads SSGGGGGGSG. 2 stretches are compositionally biased toward low complexity: residues 112 to 123 and 184 to 219; these read SSSYRESNSNNS and NNNNRNYHGGNSRYVNNNNNNNNNNYNNNNNKSNYN. Residues 262 to 273 show a composition bias toward basic residues; sequence NKKKSKKSRRKS. Low complexity predominate over residues 274-283; sequence SSNSDSSSSD. A compositionally biased stretch (basic residues) spans 292–322; the sequence is REKRKKSKSRKDKKKRKEKKKHQRKSSKRSS. Residues 342 to 351 show a composition bias toward basic and acidic residues; it reads DSDRSDSEGR. Residues 352 to 367 show a composition bias toward basic residues; that stretch reads SRKKRSKKRSKKRHDH. Over residues 368–383 the composition is skewed to basic and acidic residues; sequence HKESVHDASMWEEKVE.

The protein belongs to the NKAP family.

This is NKAP family protein from Dictyostelium discoideum (Social amoeba).